Reading from the N-terminus, the 406-residue chain is Riboflavin biosynthesis protein RibBA (406 aa).

The tract at residues 1-209 (MSEREEFKFN…IADLIKYRLR (209 aa)) is DHBP synthase. Residues 33–34 (RE), D38, 148–152 (RAGHT), and E172 contribute to the D-ribulose 5-phosphate site. Residue E34 participates in Mg(2+) binding. H151 contacts Mg(2+). The GTP cyclohydrolase II stretch occupies residues 210–406 (RETLVEKVAS…VKKDKLGHMF (197 aa)). 260 to 264 (RVHSE) lines the GTP pocket. The Zn(2+) site is built by C265, C276, and C278. GTP is bound by residues Q281, 304–306 (EGR), and T326. Residue D338 is the Proton acceptor; for GTP cyclohydrolase activity of the active site. R340 serves as the catalytic Nucleophile; for GTP cyclohydrolase activity. Positions 361 and 366 each coordinate GTP.

It in the N-terminal section; belongs to the DHBP synthase family. The protein in the C-terminal section; belongs to the GTP cyclohydrolase II family. It depends on Mg(2+) as a cofactor. Requires Mn(2+) as cofactor. The cofactor is Zn(2+).

It catalyses the reaction D-ribulose 5-phosphate = (2S)-2-hydroxy-3-oxobutyl phosphate + formate + H(+). It carries out the reaction GTP + 4 H2O = 2,5-diamino-6-hydroxy-4-(5-phosphoribosylamino)-pyrimidine + formate + 2 phosphate + 3 H(+). Its pathway is cofactor biosynthesis; riboflavin biosynthesis; 2-hydroxy-3-oxobutyl phosphate from D-ribulose 5-phosphate: step 1/1. It participates in cofactor biosynthesis; riboflavin biosynthesis; 5-amino-6-(D-ribitylamino)uracil from GTP: step 1/4. Functionally, catalyzes the conversion of D-ribulose 5-phosphate to formate and 3,4-dihydroxy-2-butanone 4-phosphate. Its function is as follows. Catalyzes the conversion of GTP to 2,5-diamino-6-ribosylamino-4(3H)-pyrimidinone 5'-phosphate (DARP), formate and pyrophosphate. The sequence is that of Riboflavin biosynthesis protein RibBA from Aquifex aeolicus (strain VF5).